A 142-amino-acid chain; its full sequence is TYAEVESFGVGQSATAVYTAPGDGRDLNITIDADGGYVIHMDYRFDWGGNPSTGKPWEDILILNSKPAQTWGPQQHVNNFYFTPGTHVTLGDKSNDGHFAIIADGIQVATYDHRLPVNSVKEVKFSTTAGSGTDIWDLLLLP.

In terms of domain architecture, Galectin spans 1–141 (TYAEVESFGV…GTDIWDLLLL (141 aa)).

In terms of assembly, homotetramer.

Cytotoxic activity against L.infantum promastigotes is completely inhibited by D-galactose. Inhibition activity against biofilm formation by S.aureus and S.epidermidis is inhibited by alpha-lactose. Hemagglutination activity is inhibited by alpha-lactose (MIC=100 mM), beta-lactose (MIC=100 mM), lactulose (MIC=100 mM), bovine submaxillary mucin (BSM) (MIC=32 ug/ml), fetuin (MIC=16 ug/ml), porcine stomach mucin (PSM) type 2 (MIC=8 ug/ml) and PSM type 3 (MIC=8 ug/ml). In terms of biological role, galactose-binding lectin. Displays antibacterial and hemagglutinin activity. Inhibits the growth of L.infantum promastigotes by damaging their membrane integrity and inducing cell apoptosis via the production of reactive oxygen species (ROS). Inhibition of L.infantum promastigotes appears to increase with time (MIC=1.2 uM/ml after 24 hours, MIC=0.9 uM/ml after 48 hours and MIC=0.6 uM/ml after 72 hours). Agglutinates Gram-negative and Gram-positive bacteria including E.coli, S.aureus and S.epidermidis, and inhibits biofilm formation by S.aureus and S.epidermidis. Displays hemagglutination activity towards all types of human erythrocytes (O, A and B) and rabbit erythrocytes. The protein is Galactose-binding lectin of Chondrilla caribensis (Chicken liver sponge).